The primary structure comprises 473 residues: Cholesterol 22-monohydroxylase CYP90B52 (473 aa).

Residues 2 to 22 (EGLLLLLPTAIIALYLYISLI) traverse the membrane as a helical segment. Cys-422 serves as a coordination point for heme.

The protein belongs to the cytochrome P450 family. Mainly expressed in leaves and roots and, at low levels, in fruits and stems.

The protein resides in the membrane. It carries out the reaction cholesterol + reduced [NADPH--hemoprotein reductase] + O2 = (22S)-22-hydroxycholesterol + oxidized [NADPH--hemoprotein reductase] + H2O + H(+). The protein operates within steroid metabolism; cholesterol metabolism. Its function is as follows. Canonical brassinosteroid (BR)-biosynthetic enzyme capable of converting cholesterol to 22S-hydroxycholesterol via sterol-C22 hydroxylation. The polypeptide is Cholesterol 22-monohydroxylase CYP90B52 (Paris polyphylla (Daiswa polyphylla)).